The sequence spans 514 residues: Type-2 serine--tRNA ligase (514 aa).

Ala313 provides a ligand contact to L-serine. Cys315 is a Zn(2+) binding site. Arg344 lines the L-serine pocket. ATP is bound by residues Arg344–Glu346 and Arg355–Val356. Arg361–Glu363 is a binding site for L-serine. Zn(2+) contacts are provided by Glu363 and Cys470. Arg477 provides a ligand contact to ATP.

The protein belongs to the class-II aminoacyl-tRNA synthetase family. Type-2 seryl-tRNA synthetase subfamily. Homodimer. Zn(2+) is required as a cofactor.

It localises to the cytoplasm. The enzyme catalyses tRNA(Ser) + L-serine + ATP = L-seryl-tRNA(Ser) + AMP + diphosphate + H(+). The catalysed reaction is tRNA(Sec) + L-serine + ATP = L-seryl-tRNA(Sec) + AMP + diphosphate + H(+). It functions in the pathway aminoacyl-tRNA biosynthesis; selenocysteinyl-tRNA(Sec) biosynthesis; L-seryl-tRNA(Sec) from L-serine and tRNA(Sec): step 1/1. Its function is as follows. Catalyzes the attachment of serine to tRNA(Ser). Is also able to aminoacylate tRNA(Sec) with serine, to form the misacylated tRNA L-seryl-tRNA(Sec), which will be further converted into selenocysteinyl-tRNA(Sec). This is Type-2 serine--tRNA ligase (serS) from Methanococcus maripaludis (strain DSM 14266 / JCM 13030 / NBRC 101832 / S2 / LL).